We begin with the raw amino-acid sequence, 318 residues long: 2-methyl-6-phytyl-1,4-hydroquinone methyltransferase (318 aa).

An N-terminal signal peptide occupies residues 1 to 39; that stretch reads MPEYLLLPAGLISLSLAIAAGLYLLTARGYQSSDSVANA. The interval 97–106 is SAM motif I; that stretch reads VLDVGCGIGG. The tract at residues 157 to 165 is SAM motif II; it reads GSFDVVWSV. Residues 184–193 are SAM motif III; sequence VVKPGGILVV.

It belongs to the class I-like SAM-binding methyltransferase superfamily. gTMT family.

It carries out the reaction 2-methyl-6-phytyl-1,4-benzene-1,4-diol + S-adenosyl-L-methionine = 2,3-dimethyl-6-phytylbenzene-1,4-diol + S-adenosyl-L-homocysteine + H(+). The enzyme catalyses 2-methyl-6-(all-trans-nonaprenyl)benzene-1,4-diol + S-adenosyl-L-methionine = plastoquinol-9 + S-adenosyl-L-homocysteine + H(+). The catalysed reaction is 6-geranylgeranyl-2-methylbenzene-1,4-diol + S-adenosyl-L-methionine = 6-geranylgeranyl-2,3-dimethylbenzene-1,4-diol + S-adenosyl-L-homocysteine + H(+). The protein operates within cofactor biosynthesis; tocopherol biosynthesis. Its function is as follows. Involved in a key methylation step in both tocopherol (vitamin E) and plastoquinone synthesis. Catalyzes the conversion of 2-methyl-6-phytyl-1,4-hydroquinol (MPBQ) to 2,3-dimethyl-6-phytyl-1,4-hydroquinol (DMPQ, a substrate for tocopherol cyclase), and 2-methyl-6-solanyl-1,4-benzoquinol (MSBQ) to plastoquinol. The chain is 2-methyl-6-phytyl-1,4-hydroquinone methyltransferase from Synechocystis sp. (strain ATCC 27184 / PCC 6803 / Kazusa).